Here is a 673-residue protein sequence, read N- to C-terminus: Methionine--tRNA ligase (673 aa).

The short motif at 13 to 23 is the 'HIGH' region element; the sequence is PYANGSIHLGH. Residues C144, C147, C157, and C160 each contribute to the Zn(2+) site. A 'KMSKS' region motif is present at residues 330 to 334; that stretch reads KMSKS. K333 contacts ATP. In terms of domain architecture, tRNA-binding spans 572–673; the sequence is DFAQLDLRIA…GRARAGMTIS (102 aa).

The protein belongs to the class-I aminoacyl-tRNA synthetase family. MetG type 1 subfamily. Homodimer. It depends on Zn(2+) as a cofactor.

It localises to the cytoplasm. The enzyme catalyses tRNA(Met) + L-methionine + ATP = L-methionyl-tRNA(Met) + AMP + diphosphate. Its function is as follows. Is required not only for elongation of protein synthesis but also for the initiation of all mRNA translation through initiator tRNA(fMet) aminoacylation. This chain is Methionine--tRNA ligase, found in Dichelobacter nodosus (strain VCS1703A).